Reading from the N-terminus, the 277-residue chain is Thymidylate synthase (277 aa).

Arginine 21 serves as a coordination point for dUMP. Histidine 51 lines the (6R)-5,10-methylene-5,6,7,8-tetrahydrofolate pocket. 126-127 (RR) serves as a coordination point for dUMP. Cysteine 159 functions as the Nucleophile in the catalytic mechanism. Residues 179-182 (RSGD), asparagine 190, and 220-222 (HLY) each bind dUMP. Residue aspartate 182 participates in (6R)-5,10-methylene-5,6,7,8-tetrahydrofolate binding. Alanine 276 serves as a coordination point for (6R)-5,10-methylene-5,6,7,8-tetrahydrofolate.

The protein belongs to the thymidylate synthase family. Bacterial-type ThyA subfamily. Homodimer.

It localises to the cytoplasm. The enzyme catalyses dUMP + (6R)-5,10-methylene-5,6,7,8-tetrahydrofolate = 7,8-dihydrofolate + dTMP. It participates in pyrimidine metabolism; dTTP biosynthesis. Its function is as follows. Catalyzes the reductive methylation of 2'-deoxyuridine-5'-monophosphate (dUMP) to 2'-deoxythymidine-5'-monophosphate (dTMP) while utilizing 5,10-methylenetetrahydrofolate (mTHF) as the methyl donor and reductant in the reaction, yielding dihydrofolate (DHF) as a by-product. This enzymatic reaction provides an intracellular de novo source of dTMP, an essential precursor for DNA biosynthesis. This is Thymidylate synthase from Alcanivorax borkumensis (strain ATCC 700651 / DSM 11573 / NCIMB 13689 / SK2).